The following is a 78-amino-acid chain: Cytochrome c-551 (78 aa).

4 residues coordinate heme c: Cys-14, Cys-17, His-18, and Met-55.

Binds 1 heme c group covalently per subunit.

This is Cytochrome c-551 from Halorhodospira halophila (Ectothiorhodospira halophila).